Here is a 137-residue protein sequence, read N- to C-terminus: Proofreading thioesterase EntH (137 aa).

Residue glutamate 63 is the Nucleophile or proton acceptor of the active site.

Belongs to the thioesterase PaaI family. As to quaternary structure, homotetramer. Dimer of dimers. Interacts specifically with the aryl carrier protein (ArCP) domain of EntB.

It localises to the cytoplasm. The protein operates within siderophore biosynthesis; enterobactin biosynthesis. Its function is as follows. Required for optimal enterobactin synthesis. Acts as a proofreading enzyme that prevents EntB misacylation by hydrolyzing the thioester bound existing between EntB and wrongly charged molecules. The protein is Proofreading thioesterase EntH of Escherichia coli O6:H1 (strain CFT073 / ATCC 700928 / UPEC).